Reading from the N-terminus, the 458-residue chain is UDP-N-acetylmuramate--L-alanine ligase (458 aa).

An ATP-binding site is contributed by 118 to 124 (GTHGKTT).

Belongs to the MurCDEF family.

The protein resides in the cytoplasm. It catalyses the reaction UDP-N-acetyl-alpha-D-muramate + L-alanine + ATP = UDP-N-acetyl-alpha-D-muramoyl-L-alanine + ADP + phosphate + H(+). Its pathway is cell wall biogenesis; peptidoglycan biosynthesis. Functionally, cell wall formation. This Clostridium botulinum (strain ATCC 19397 / Type A) protein is UDP-N-acetylmuramate--L-alanine ligase.